The chain runs to 433 residues: Serine hydroxymethyltransferase (433 aa).

(6S)-5,6,7,8-tetrahydrofolate-binding positions include Leu-132 and 136 to 138 (GHL). Lys-241 carries the N6-(pyridoxal phosphate)lysine modification.

Belongs to the SHMT family. In terms of assembly, homodimer. Requires pyridoxal 5'-phosphate as cofactor.

It is found in the cytoplasm. It carries out the reaction (6R)-5,10-methylene-5,6,7,8-tetrahydrofolate + glycine + H2O = (6S)-5,6,7,8-tetrahydrofolate + L-serine. It participates in one-carbon metabolism; tetrahydrofolate interconversion. It functions in the pathway amino-acid biosynthesis; glycine biosynthesis; glycine from L-serine: step 1/1. In terms of biological role, catalyzes the reversible interconversion of serine and glycine with tetrahydrofolate (THF) serving as the one-carbon carrier. This reaction serves as the major source of one-carbon groups required for the biosynthesis of purines, thymidylate, methionine, and other important biomolecules. Also exhibits THF-independent aldolase activity toward beta-hydroxyamino acids, producing glycine and aldehydes, via a retro-aldol mechanism. This Rhodopseudomonas palustris (strain HaA2) protein is Serine hydroxymethyltransferase.